A 95-amino-acid chain; its full sequence is Aspartyl/glutamyl-tRNA(Asn/Gln) amidotransferase subunit C (95 aa).

The protein belongs to the GatC family. As to quaternary structure, heterotrimer of A, B and C subunits.

The catalysed reaction is L-glutamyl-tRNA(Gln) + L-glutamine + ATP + H2O = L-glutaminyl-tRNA(Gln) + L-glutamate + ADP + phosphate + H(+). It catalyses the reaction L-aspartyl-tRNA(Asn) + L-glutamine + ATP + H2O = L-asparaginyl-tRNA(Asn) + L-glutamate + ADP + phosphate + 2 H(+). Functionally, allows the formation of correctly charged Asn-tRNA(Asn) or Gln-tRNA(Gln) through the transamidation of misacylated Asp-tRNA(Asn) or Glu-tRNA(Gln) in organisms which lack either or both of asparaginyl-tRNA or glutaminyl-tRNA synthetases. The reaction takes place in the presence of glutamine and ATP through an activated phospho-Asp-tRNA(Asn) or phospho-Glu-tRNA(Gln). The protein is Aspartyl/glutamyl-tRNA(Asn/Gln) amidotransferase subunit C of Methylobacillus flagellatus (strain ATCC 51484 / DSM 6875 / VKM B-1610 / KT).